The chain runs to 207 residues: Uridine kinase (207 aa).

13–20 is an ATP binding site; it reads GASGSGKT.

Belongs to the uridine kinase family.

It localises to the cytoplasm. The enzyme catalyses uridine + ATP = UMP + ADP + H(+). It catalyses the reaction cytidine + ATP = CMP + ADP + H(+). The protein operates within pyrimidine metabolism; CTP biosynthesis via salvage pathway; CTP from cytidine: step 1/3. It participates in pyrimidine metabolism; UMP biosynthesis via salvage pathway; UMP from uridine: step 1/1. In Ureaplasma parvum serovar 3 (strain ATCC 27815 / 27 / NCTC 11736), this protein is Uridine kinase.